The chain runs to 115 residues: Con-Ins T1B (115 aa).

A signal peptide spans 1–24; it reads MTTSFYFLLMALGLLLYVCQSSFG. Residues 25–29 constitute a propeptide that is removed on maturation; that stretch reads NQHTR. 4-hydroxyproline; partial is present on Pro-34. 3 disulfides stabilise this stretch: Cys-38/Cys-101, Cys-50/Cys-114, and Cys-100/Cys-105. A propeptide spans 52-94 (c peptide); the sequence is RKRNDAGKKRGQASPLWQRGGSLSMLKARAKRNEAFHLQRAHR. Glu-98 carries the post-translational modification 4-carboxyglutamate. At Pro-104 the chain carries 4-hydroxyproline; partial. Glu-109 is modified (4-carboxyglutamate; partial). Cys-114 is modified (cysteine amide).

This sequence belongs to the insulin family. Heterodimer of A and B chains; disulfide-linked. As to expression, expressed by the venom gland.

It is found in the secreted. In terms of biological role, this venom insulin, from a fish-hunting cone snail, facilitates prey capture by rapidly inducing hypoglycemic shock. It is one of the smallest known insulin found in nature and lacks the C-terminal segment of the B chain that, in human insulin, mediates engagement of the insulin receptor (INSR) and assembly of the hormone's hexameric storage form. Despite lacking this segment, it both binds and activates human insulin receptor (long isoform (HIR-B) of INSR) with a high potency (EC(50)=12.0 nM). In vivo, intraperitoneal injection of this peptide into zebrafish lowers blood glucose with a lower potency than human insulin. In addition, when applied to water, this peptide reduces overall locomotor activity of zebrafish larvae, observed as a significant decrease in the percentage of time spent swimming and movement frequency. When tested on a mouse model of diabetes, this insulin also lowers blood glucose with a 10-fold lower potency than human insulin. The polypeptide is Con-Ins T1B (Conus tulipa (Fish-hunting cone snail)).